Reading from the N-terminus, the 82-residue chain is Protein WFDC11 (82 aa).

Positions 1–21 are cleaved as a signal peptide; it reads MKPSWFPCLVFLCMLLLSALG.

Its subcellular location is the secreted. This is Protein WFDC11 (Wfdc11) from Mus musculus (Mouse).